The sequence spans 338 residues: Glycerol-3-phosphate dehydrogenase [NAD(P)+] (338 aa).

Residues serine 13, tryptophan 14, and lysine 108 each coordinate NADPH. The sn-glycerol 3-phosphate site is built by lysine 108, glycine 139, and serine 141. Alanine 143 provides a ligand contact to NADPH. Positions 194, 247, 257, 258, and 259 each coordinate sn-glycerol 3-phosphate. Residue lysine 194 is the Proton acceptor of the active site. Residue arginine 258 participates in NADPH binding. 2 residues coordinate NADPH: valine 282 and glutamate 284.

Belongs to the NAD-dependent glycerol-3-phosphate dehydrogenase family.

It is found in the cytoplasm. The catalysed reaction is sn-glycerol 3-phosphate + NAD(+) = dihydroxyacetone phosphate + NADH + H(+). It carries out the reaction sn-glycerol 3-phosphate + NADP(+) = dihydroxyacetone phosphate + NADPH + H(+). The protein operates within membrane lipid metabolism; glycerophospholipid metabolism. Functionally, catalyzes the reduction of the glycolytic intermediate dihydroxyacetone phosphate (DHAP) to sn-glycerol 3-phosphate (G3P), the key precursor for phospholipid synthesis. In Streptococcus pneumoniae (strain CGSP14), this protein is Glycerol-3-phosphate dehydrogenase [NAD(P)+].